A 69-amino-acid chain; its full sequence is Sec-independent protein translocase protein TatA (69 aa).

A helical membrane pass occupies residues 1–21; that stretch reads MFGLGGQELILILMIILLLFG. The segment at 49-69 is disordered; the sequence is EFNKAMDDETPKKKDFGPDRE.

The protein belongs to the TatA/E family. As to quaternary structure, forms a complex with TatC.

It is found in the cell inner membrane. Its function is as follows. Part of the twin-arginine translocation (Tat) system that transports large folded proteins containing a characteristic twin-arginine motif in their signal peptide across membranes. TatA could form the protein-conducting channel of the Tat system. This chain is Sec-independent protein translocase protein TatA, found in Chlorobium luteolum (strain DSM 273 / BCRC 81028 / 2530) (Pelodictyon luteolum).